A 401-amino-acid chain; its full sequence is Glycerol-1-phosphate dehydrogenase [NAD(P)+] (401 aa).

Residues aspartate 57, 118–122 (GTIHD), and 140–143 (TAPS) each bind NAD(+). Aspartate 145 contributes to the substrate binding site. Serine 149 serves as a coordination point for NAD(+). Aspartate 192 lines the substrate pocket. Residues aspartate 192 and histidine 272 each coordinate Ni(2+). Histidine 276 contacts substrate. Residue histidine 292 participates in Ni(2+) binding.

The protein belongs to the glycerol-1-phosphate dehydrogenase family. As to quaternary structure, homodimer. Ni(2+) is required as a cofactor.

It localises to the cytoplasm. It carries out the reaction sn-glycerol 1-phosphate + NAD(+) = dihydroxyacetone phosphate + NADH + H(+). The enzyme catalyses sn-glycerol 1-phosphate + NADP(+) = dihydroxyacetone phosphate + NADPH + H(+). Functionally, catalyzes the NAD(P)H-dependent reduction of dihydroxyacetonephosphate (DHAP or glycerone phosphate) to glycerol 1-phosphate (G1P). The G1P thus generated is probably used for the synthesis of phosphoglycerolipids in Gram-positive bacterial species. The chain is Glycerol-1-phosphate dehydrogenase [NAD(P)+] from Bacillus licheniformis (strain ATCC 14580 / DSM 13 / JCM 2505 / CCUG 7422 / NBRC 12200 / NCIMB 9375 / NCTC 10341 / NRRL NRS-1264 / Gibson 46).